The sequence spans 1148 residues: Trafficking protein particle complex subunit 9 (1148 aa).

Phosphoserine occurs at positions 566 and 953.

Belongs to the NIBP family. As to quaternary structure, component of the multisubunit TRAPP (transport protein particle) complex, which includes at least TRAPPC2, TRAPPC2L, TRAPPC3, TRAPPC3L, TRAPPC4, TRAPPC5, TRAPPC8, TRAPPC9, TRAPPC10, TRAPPC11 and TRAPPC12. Directly interacts with IKBKB and MAP3K14. Expressed in neurons of the pyramidal layer of the cortex, in spinal cord motor neurons and white matter neurons (at protein level).

The protein localises to the golgi apparatus. It is found in the cis-Golgi network. The protein resides in the endoplasmic reticulum. Its subcellular location is the cytoplasm. In terms of biological role, functions as an activator of NF-kappa-B through increased phosphorylation of the IKK complex. May function in neuronal cells differentiation. May play a role in vesicular transport from endoplasmic reticulum to Golgi. The polypeptide is Trafficking protein particle complex subunit 9 (Trappc9) (Mus musculus (Mouse)).